Consider the following 292-residue polypeptide: Polyamine aminopropyltransferase 1 (292 aa).

Residues 1-244 enclose the PABS domain; the sequence is MELGMFRLNI…YVNSFVFASD (244 aa). Gln-35 lines the S-methyl-5'-thioadenosine pocket. Positions 66 and 90 each coordinate spermidine. S-methyl-5'-thioadenosine is bound by residues Asp-110 and 142–143; that span reads DG. Catalysis depends on Asp-163, which acts as the Proton acceptor.

This sequence belongs to the spermidine/spermine synthase family. In terms of assembly, homodimer or homotetramer.

The protein resides in the cytoplasm. It catalyses the reaction norspermine + S-adenosyl 3-(methylsulfanyl)propylamine = caldopentamine + S-methyl-5'-thioadenosine + 2 H(+). The enzyme catalyses norspermidine + S-adenosyl 3-(methylsulfanyl)propylamine = norspermine + S-methyl-5'-thioadenosine + H(+). The catalysed reaction is S-adenosyl 3-(methylsulfanyl)propylamine + spermidine = thermospermine + S-methyl-5'-thioadenosine + H(+). Its function is as follows. Involved in the biosynthesis of polyamines which are thought to support the growth of thermophilic microorganisms under high-temperature conditions. It seems that long-chain and branched-chain of polyamines effectively stabilize DNA and RNA, respectively. Catalyzes the irreversible transfer of a propylamine group from the amino donor S-adenosylmethioninamine (decarboxy-AdoMet) to norspermidine, spermidine and norspermine to yield norspermine, thermospermine and caldopentamine, respectively. It can also synthesize sym-norspermidine (bis(3-aminopropyl)amine) from 1,3-diaminopropane with a very low activity. The biosynthesis of caldohexamine and caldoheptamine from caldopentamine has been also observed. The chain is Polyamine aminopropyltransferase 1 from Hyperthermus butylicus (strain DSM 5456 / JCM 9403 / PLM1-5).